The following is a 139-amino-acid chain: Desampylase (139 aa).

Residues 6–139 form the MPN domain; it reads LSLAADARDS…EFRELSVAVE (134 aa). Glutamate 31 (proton donor/acceptor) is an active-site residue. The Zn(2+) site is built by histidine 88, histidine 90, and aspartate 101. The JAMM motif motif lies at 88–101; sequence HSHPESDPVPSATD.

The protein belongs to the peptidase M67B family. As to quaternary structure, monomer. Zn(2+) is required as a cofactor.

The enzyme catalyses an N(6)-[small archaeal modifier protein]-[protein]-L-lysine + H2O = a [protein]-L-lysine + a [small archaeal modifier protein].. Inhibited by EDTA and N-ethylmaleimide (NEM) in vitro. Functionally, metalloprotease that displays desampylase (DSAMP) activity, cleaving ubiquitin-like small archaeal modifier proteins (SAMP1, SAMP2 and SAMP3) from protein conjugates (isopeptide- and linear-linked). Thus, likely regulates sampylation and the pools of 'free' SAMP available for protein modification. Functions as a specific and not a general protease since it is unable to hydrolyze a variety of unmodified proteins otherwise hydrolyzed by proteinase K. In Haloferax volcanii (strain ATCC 29605 / DSM 3757 / JCM 8879 / NBRC 14742 / NCIMB 2012 / VKM B-1768 / DS2) (Halobacterium volcanii), this protein is Desampylase.